An 86-amino-acid polypeptide reads, in one-letter code: Cell division topological specificity factor (86 aa).

It belongs to the MinE family.

Functionally, prevents the cell division inhibition by proteins MinC and MinD at internal division sites while permitting inhibition at polar sites. This ensures cell division at the proper site by restricting the formation of a division septum at the midpoint of the long axis of the cell. This Shewanella pealeana (strain ATCC 700345 / ANG-SQ1) protein is Cell division topological specificity factor.